The chain runs to 474 residues: Serine--tRNA ligase (474 aa).

Residue threonine 278–glutamate 280 coordinates L-serine. Arginine 309 to glutamate 311 is a binding site for ATP. Glutamate 332 is an L-serine binding site. Residue glutamate 396–serine 399 coordinates ATP. Residue serine 432 coordinates L-serine.

Belongs to the class-II aminoacyl-tRNA synthetase family. Type-1 seryl-tRNA synthetase subfamily. In terms of assembly, homodimer. The tRNA molecule binds across the dimer.

Its subcellular location is the cytoplasm. It catalyses the reaction tRNA(Ser) + L-serine + ATP = L-seryl-tRNA(Ser) + AMP + diphosphate + H(+). It carries out the reaction tRNA(Sec) + L-serine + ATP = L-seryl-tRNA(Sec) + AMP + diphosphate + H(+). Its pathway is aminoacyl-tRNA biosynthesis; selenocysteinyl-tRNA(Sec) biosynthesis; L-seryl-tRNA(Sec) from L-serine and tRNA(Sec): step 1/1. Functionally, catalyzes the attachment of serine to tRNA(Ser). Is also able to aminoacylate tRNA(Sec) with serine, to form the misacylated tRNA L-seryl-tRNA(Sec), which will be further converted into selenocysteinyl-tRNA(Sec). The polypeptide is Serine--tRNA ligase (Caulobacter sp. (strain K31)).